The primary structure comprises 512 residues: Chlorogenic acid esterase (512 aa).

Residues 1–18 (MLLRLCIIATLLVSHCVA) form the signal peptide. N47, N80, and N98 each carry an N-linked (GlcNAc...) asparagine glycan. Cysteines 92 and 120 form a disulfide. Catalysis depends on S230, which acts as the Acyl-ester intermediate. N271 is a glycosylation site (N-linked (GlcNAc...) asparagine). A disulfide bond links C281 and C292. N295, N322, and N328 each carry an N-linked (GlcNAc...) asparagine glycan. E351 acts as the Charge relay system in catalysis. 2 N-linked (GlcNAc...) asparagine glycosylation sites follow: N391 and N402. Catalysis depends on H416, which acts as the Charge relay system. A glycan (N-linked (GlcNAc...) asparagine) is linked at N474.

The protein belongs to the type-B carboxylesterase/lipase family.

Its subcellular location is the secreted. It carries out the reaction chlorogenate + H2O = L-quinate + (E)-caffeate + H(+). In terms of biological role, extracellular chlorogenic acid esterase that releases caffeic acid from chlorogenic acid (CGA) contained in natural substrates such as apple marc and coffee pulp. Shows no activity towards 5-O-p-coumaroyl quinic acid, another quinic ester derivative, and rosmarinic acid, another caffeic ester derivative. This chain is Chlorogenic acid esterase, found in Aspergillus niger.